The primary structure comprises 679 residues: Glycine--tRNA ligase beta subunit (679 aa).

It belongs to the class-II aminoacyl-tRNA synthetase family. As to quaternary structure, tetramer of two alpha and two beta subunits.

It is found in the cytoplasm. It carries out the reaction tRNA(Gly) + glycine + ATP = glycyl-tRNA(Gly) + AMP + diphosphate. The protein is Glycine--tRNA ligase beta subunit of Streptococcus pyogenes serotype M18 (strain MGAS8232).